Consider the following 863-residue polypeptide: Eukaryotic translation initiation factor 3 subunit C (863 aa).

Residues 1–92 (MSRFFRGGDD…VKSAKDKRFD (92 aa)) are disordered. The span at 16 to 53 (SSDEEELYSTSEEEEEEDQDQEESSEEEDEEESSDEDE) shows a compositional bias: acidic residues. Positions 79-92 (GATKVKSAKDKRFD) are enriched in basic and acidic residues. Residues 604 to 778 (FHMHINLELL…KTVIFRKGVE (175 aa)) enclose the PCI domain. Positions 808–863 (TQGSANAFSRKDGRQGGQRGGGQRSGRGGARAGGNAQRQAGGTQFTGGALGAAVRG) are disordered. Positions 822-839 (QGGQRGGGQRSGRGGARA) are enriched in gly residues. Residues 840–850 (GGNAQRQAGGT) are compositionally biased toward low complexity.

This sequence belongs to the eIF-3 subunit C family. Component of the eukaryotic translation initiation factor 3 (eIF-3) complex.

It localises to the cytoplasm. In terms of biological role, component of the eukaryotic translation initiation factor 3 (eIF-3) complex, which is involved in protein synthesis of a specialized repertoire of mRNAs and, together with other initiation factors, stimulates binding of mRNA and methionyl-tRNAi to the 40S ribosome. The eIF-3 complex specifically targets and initiates translation of a subset of mRNAs involved in cell proliferation. The sequence is that of Eukaryotic translation initiation factor 3 subunit C from Chaetomium globosum (strain ATCC 6205 / CBS 148.51 / DSM 1962 / NBRC 6347 / NRRL 1970) (Soil fungus).